The primary structure comprises 335 residues: Holliday junction branch migration complex subunit RuvB (335 aa).

The segment at 4–184 is large ATPase domain (RuvB-L); the sequence is ADRLIQPTAL…FGIVQRLEFY (181 aa). Residues isoleucine 23, arginine 24, glycine 65, lysine 68, threonine 69, threonine 70, 131 to 133, arginine 174, tyrosine 184, and arginine 221 each bind ATP; that span reads EDY. Position 69 (threonine 69) interacts with Mg(2+). The interval 185 to 255 is small ATPAse domain (RuvB-S); the sequence is NIKDLTQIVK…VASAALDMLD (71 aa). The interval 258–335 is head domain (RuvB-H); that stretch reads KEGFDYMDRK…LHFGYDYEPN (78 aa). DNA-binding residues include arginine 294, arginine 313, and arginine 318.

Belongs to the RuvB family. Homohexamer. Forms an RuvA(8)-RuvB(12)-Holliday junction (HJ) complex. HJ DNA is sandwiched between 2 RuvA tetramers; dsDNA enters through RuvA and exits via RuvB. An RuvB hexamer assembles on each DNA strand where it exits the tetramer. Each RuvB hexamer is contacted by two RuvA subunits (via domain III) on 2 adjacent RuvB subunits; this complex drives branch migration. In the full resolvosome a probable DNA-RuvA(4)-RuvB(12)-RuvC(2) complex forms which resolves the HJ.

The protein resides in the cytoplasm. The enzyme catalyses ATP + H2O = ADP + phosphate + H(+). The RuvA-RuvB-RuvC complex processes Holliday junction (HJ) DNA during genetic recombination and DNA repair, while the RuvA-RuvB complex plays an important role in the rescue of blocked DNA replication forks via replication fork reversal (RFR). RuvA specifically binds to HJ cruciform DNA, conferring on it an open structure. The RuvB hexamer acts as an ATP-dependent pump, pulling dsDNA into and through the RuvAB complex. RuvB forms 2 homohexamers on either side of HJ DNA bound by 1 or 2 RuvA tetramers; 4 subunits per hexamer contact DNA at a time. Coordinated motions by a converter formed by DNA-disengaged RuvB subunits stimulates ATP hydrolysis and nucleotide exchange. Immobilization of the converter enables RuvB to convert the ATP-contained energy into a lever motion, pulling 2 nucleotides of DNA out of the RuvA tetramer per ATP hydrolyzed, thus driving DNA branch migration. The RuvB motors rotate together with the DNA substrate, which together with the progressing nucleotide cycle form the mechanistic basis for DNA recombination by continuous HJ branch migration. Branch migration allows RuvC to scan DNA until it finds its consensus sequence, where it cleaves and resolves cruciform DNA. In Pseudoalteromonas atlantica (strain T6c / ATCC BAA-1087), this protein is Holliday junction branch migration complex subunit RuvB.